A 287-amino-acid chain; its full sequence is MENNSSNAAYLRSERVEYELTNDSTDVKLSFPSLLDNKISLLKGHCCKIDHIVLEYRNQVPINATGHVIIEIHDQRLHDGDSKQAEFTIPVQCNCNLHYYSSSFSTMKDINPWRVMYRVVDTNVINGVHFCRIQGKLKLVNCKRSPNDIQFRSPKIEILSKAFTERDIDFWSVGRKAQQRKLVQGPSLIGSRSMRYAPCSIGPNESWAVRSELGLHEPWAVKERGWASIERPYNQLNRLNPDALDPGKSVSQVGSDQFTREDLNDIISKTVNICLNTSMQSHVSKNV.

It belongs to the begomovirus movement protein BC1 family. As to quaternary structure, binds to dimeric supercoiled plasmid DNA. Phosphorylated.

The protein localises to the host cell membrane. The protein resides in the host microsome membrane. It is found in the host endoplasmic reticulum membrane. Its function is as follows. Transports viral genome to neighboring plant cells directly through plasmosdesmata, without any budding. The movement protein allows efficient cell to cell propagation, by bypassing the host cell wall barrier. Begomovirus genome is shuttled out of nucleus by Nuclear shuttle protein (NSP) and the movement protein transports the DNA-NSP complex to cell plasmodesmata and facilitates further movement across the cell wall. The protein is Movement protein BC1 of Manihot esculenta (Cassava).